The primary structure comprises 314 residues: Serine/threonine-protein phosphatase SIT4 (314 aa).

Mn(2+) contacts are provided by Asp-53, His-55, Asp-85, and Asn-117. His-118 functions as the Proton donor in the catalytic mechanism. His-167 and His-241 together coordinate Mn(2+).

It belongs to the PPP phosphatase family. PP-6 (PP-V) subfamily. Interacts with MDS3. Requires Mn(2+) as cofactor.

It is found in the cytoplasm. The enzyme catalyses O-phospho-L-seryl-[protein] + H2O = L-seryl-[protein] + phosphate. It catalyses the reaction O-phospho-L-threonyl-[protein] + H2O = L-threonyl-[protein] + phosphate. Serine/threonine protein phosphatase which is involved in the dephosphorylation of the large subunit of RNA polymerase II. Is required in late G1 for normal G1 cyclin expression, bud initiation and expression of certain genes that are periodically expressed during late G1. Plays a role during hyphal growth through the regulation of cell wall biogenesis, osmosensing and protein translation. Involved in virulence in a mouse systemic infection model. The polypeptide is Serine/threonine-protein phosphatase SIT4 (SIT4) (Candida albicans (strain SC5314 / ATCC MYA-2876) (Yeast)).